We begin with the raw amino-acid sequence, 261 residues long: Carnitinyl-CoA dehydratase (261 aa).

Glu-111 acts as the Nucleophile in catalysis. The active-site Proton acceptor is Glu-131.

It belongs to the enoyl-CoA hydratase/isomerase family.

It carries out the reaction (R)-carnitinyl-CoA = crotonobetainyl-CoA + H2O. Its pathway is amine and polyamine metabolism; carnitine metabolism. Its function is as follows. Catalyzes the reversible dehydration of L-carnitinyl-CoA to crotonobetainyl-CoA. The polypeptide is Carnitinyl-CoA dehydratase (Escherichia coli (strain ATCC 8739 / DSM 1576 / NBRC 3972 / NCIMB 8545 / WDCM 00012 / Crooks)).